We begin with the raw amino-acid sequence, 188 residues long: Casparian strip membrane protein 1 (188 aa).

The Cytoplasmic portion of the chain corresponds to 1–24 (MKAGALELGHASKTTKSGVNRGMS). Residues 25–45 (ILDLFIRIIAIIATLGSAIAM) form a helical membrane-spanning segment. Over 46–72 (GTTNETLPFFTQFVRFKAKYSDLPTFT) the chain is Extracellular. The N-linked (GlcNAc...) asparagine glycan is linked to N49. Residues 73-93 (FFVVANAIVSAYLVLSLGLSI) traverse the membrane as a helical segment. Topologically, residues 94 to 105 (YHIMRSRAQATR) are cytoplasmic. The helical transmembrane segment at 106–126 (IALIFFDAAMLGLLTGGASAS) threads the bilayer. Over 127–159 (AAIVYLAHKGNRKTNWFPICQQYDSFCHRTSGS) the chain is Extracellular. Residues 160–180 (LVGSFAGSVLIILLIFLSAIA) traverse the membrane as a helical segment. At 181–188 (LSRQSLNH) the chain is on the cytoplasmic side.

Belongs to the Casparian strip membrane proteins (CASP) family. Homodimer and heterodimers.

The protein localises to the cell membrane. Functionally, regulates membrane-cell wall junctions and localized cell wall deposition. Required for establishment of the Casparian strip membrane domain (CSD) and the subsequent formation of Casparian strips, a cell wall modification of the root endodermis that determines an apoplastic barrier between the intraorganismal apoplasm and the extraorganismal apoplasm and prevents lateral diffusion. The chain is Casparian strip membrane protein 1 from Solanum tuberosum (Potato).